A 204-amino-acid chain; its full sequence is MIPTSDITGLILAGGRGSRMGGVDKGLQVFNGAPMAMHALMRLSPQVGHVLINANRNLAAYESFGVPVVVDAVPDFAGPLAGILAGLEQCQTPYLLTAPCDSPFVPTDLAARLSTALAEAGARIAMPVTLEPDENGRPRRQVQPVFCLIDAALADDLTTYLQQGGRKIDAWTARHPSVEVVFDDAAAFANINTLAELRQLAERR.

Residues leucine 12 to glycine 14, lysine 25, asparagine 53, aspartate 71, and aspartate 101 contribute to the GTP site. Residue aspartate 101 participates in Mg(2+) binding.

This sequence belongs to the MobA family. In terms of assembly, monomer. Requires Mg(2+) as cofactor.

It is found in the cytoplasm. It carries out the reaction Mo-molybdopterin + GTP + H(+) = Mo-molybdopterin guanine dinucleotide + diphosphate. Functionally, transfers a GMP moiety from GTP to Mo-molybdopterin (Mo-MPT) cofactor (Moco or molybdenum cofactor) to form Mo-molybdopterin guanine dinucleotide (Mo-MGD) cofactor. This chain is Molybdenum cofactor guanylyltransferase, found in Ralstonia nicotianae (strain ATCC BAA-1114 / GMI1000) (Ralstonia solanacearum).